The following is a 234-amino-acid chain: Sugar fermentation stimulation protein A (234 aa).

A DNA-binding region (H-T-H motif) is located at residues 201–220 (LLSEAQQRGVEILAYKAEIS).

Belongs to the SfsA family.

Functionally, binds to DNA non-specifically. Could be a regulatory factor involved in maltose metabolism. The protein is Sugar fermentation stimulation protein A of Shigella boydii serotype 4 (strain Sb227).